The primary structure comprises 380 residues: Cytochrome b (380 aa).

Helical transmembrane passes span 33–53, 77–98, 113–133, and 178–198; these read FGSL…FLAM, WMIR…FLHI, WNIG…GYVL, and FFTL…LHLL. Positions 83 and 97 each coordinate heme b. Positions 182 and 196 each coordinate heme b. His-201 contributes to the a ubiquinone binding site. A run of 4 helical transmembrane segments spans residues 226 to 246, 288 to 308, 320 to 340, and 347 to 367; these read IKDI…TLLS, LGGV…PALH, LSQF…WIGG, and FITI…LLMP.

Belongs to the cytochrome b family. As to quaternary structure, the cytochrome bc1 complex contains 11 subunits: 3 respiratory subunits (MT-CYB, CYC1 and UQCRFS1), 2 core proteins (UQCRC1 and UQCRC2) and 6 low-molecular weight proteins (UQCRH/QCR6, UQCRB/QCR7, UQCRQ/QCR8, UQCR10/QCR9, UQCR11/QCR10 and a cleavage product of UQCRFS1). This cytochrome bc1 complex then forms a dimer. It depends on heme b as a cofactor.

Its subcellular location is the mitochondrion inner membrane. Its function is as follows. Component of the ubiquinol-cytochrome c reductase complex (complex III or cytochrome b-c1 complex) that is part of the mitochondrial respiratory chain. The b-c1 complex mediates electron transfer from ubiquinol to cytochrome c. Contributes to the generation of a proton gradient across the mitochondrial membrane that is then used for ATP synthesis. The chain is Cytochrome b (MT-CYB) from Pongo abelii (Sumatran orangutan).